The primary structure comprises 546 residues: UDP-glycosyltransferase FPY2 (546 aa).

The signal sequence occupies residues 1 to 20 (MSLPKAQILVVVTVGGSTNS). Residues 517-537 (LNNIDVALLFFILLGIISWIT) form a helical membrane-spanning segment.

The protein belongs to the glycosyltransferase 28 family.

The protein localises to the membrane. The protein operates within secondary metabolite biosynthesis. UDP-glycosyltransferase; part of the gene cluster that mediates the biosynthesis of the gamma-pyrones fusapyrone (FPY) and deoxyfusapyrone (dFPY). FPY is an undecaketide and thus likely synthesized by the polyketide synthase FPY1 from acetyl-CoA functioning as starter unit and the addition of 10 malonyl-CoA extender units by successive Claisen-condensations. Next to this, FPY shares some rare features: C-glycosylated 4-deoxyglucose at C-3, a gem-dimethyl group at C-13, and an alpha-beta to beta-gamma double bond shift at C-20. During FPY biosynthesis mono-C-methyl groups are transferred to the tetra-, penta-, hexa- and heptaketide, while two C-methyl groups are transferred to the nonaketide, suggesting that the CMet domain is programmed to selectively catalyze two successive C-alpha-methylation reactions of the nonaketide, while other alpha-carbons are non- or mono-methylated only. While the origin of the 4'-deoxyglucose moiety remains opaque, its transfer to C-3 is most likely mediated by the C-glycosyltransferase FPY2. Next to this, the hydroxyl group present at C-33 and discriminating between FPY and dFPY, is likely to be installed by the cytochrome P450 monooxygenase FPY7. No putative function can be predicted for the remaining genes FPY3-FPY6. The polypeptide is UDP-glycosyltransferase FPY2 (Fusarium mangiferae (Mango malformation disease fungus)).